The chain runs to 558 residues: Autophagy-related protein 18 (558 aa).

A WD 1 repeat occupies 4–42; it reads DYPPTINFINFNQTGSCISIATDDGFSIYNCDPFGKFYS. The segment at 176 to 264 is disordered; that stretch reads SSSSSQVEPP…FQQTGITGSS (89 aa). The span at 188–201 shows a compositional bias: polar residues; the sequence is PQQRSNFSGNTLET. A compositionally biased stretch (low complexity) spans 210 to 252; it reads GSNNSNNGNNNNNNNNNNNNNNNNNNNNNNNNNNSNNEENSNS. The segment covering 253 to 264 has biased composition (polar residues); that stretch reads KSFQQTGITGSS. WD repeat units lie at residues 290–330 and 335–374; these read AHKG…KIYQ and TYPT…ETSS. The short motif at 331-335 is the L/FRRG motif element; the sequence is FRRGT. Positions 400 to 432 are disordered; sequence SSESLTESQSKDPHVDTSRSTVGRMIRKSSQQL.

This sequence belongs to the WD repeat PROPPIN family. Component of the PI(3,5)P2 regulatory complex.

It localises to the preautophagosomal structure membrane. It is found in the vacuole membrane. The protein resides in the endosome membrane. In terms of biological role, the PI(3,5)P2 regulatory complex regulates both the synthesis and turnover of phosphatidylinositol 3,5-bisphosphate (PtdIns(3,5)P2). Necessary for proper vacuole morphology. Plays an important role in osmotically-induced vacuole fragmentation. Required for cytoplasm to vacuole transport (Cvt) vesicle formation, pexophagy and starvation-induced autophagy. Involved in correct ATG9 trafficking to the pre-autophagosomal structure. Might also be involved in premeiotic DNA replication. The chain is Autophagy-related protein 18 (ATG18) from Vanderwaltozyma polyspora (strain ATCC 22028 / DSM 70294 / BCRC 21397 / CBS 2163 / NBRC 10782 / NRRL Y-8283 / UCD 57-17) (Kluyveromyces polysporus).